A 72-amino-acid polypeptide reads, in one-letter code: Protein kish (72 aa).

An N-terminal signal peptide occupies residues 1–26 (MVAIFNFQSLLVVILLFICTCTYIRG). Topologically, residues 27-47 (SYPSLLEVRDKHSFSGLPRKA) are extracellular. A helical membrane pass occupies residues 48–68 (AIIGERLSPWVSACCLIMGLW). Topologically, residues 69–72 (TLYN) are cytoplasmic.

This sequence belongs to the KISH family.

It localises to the golgi apparatus membrane. Involved in the early part of the secretory pathway. The polypeptide is Protein kish (tmem167) (Dictyostelium discoideum (Social amoeba)).